The primary structure comprises 237 residues: ATP synthase subunit a (237 aa).

A run of 5 helical transmembrane segments spans residues 18 to 38 (LTLL…VYWA), 77 to 97 (SLFL…GLMA), 114 to 134 (NIAF…VEGI), 167 to 187 (LALR…LLVT), and 208 to 230 (AFSV…MYLG).

It belongs to the ATPase A chain family. As to quaternary structure, F-type ATPases have 2 components, CF(1) - the catalytic core - and CF(0) - the membrane proton channel. CF(1) has five subunits: alpha(3), beta(3), gamma(1), delta(1), epsilon(1). CF(0) has three main subunits: a(1), b(2) and c(9-12). The alpha and beta chains form an alternating ring which encloses part of the gamma chain. CF(1) is attached to CF(0) by a central stalk formed by the gamma and epsilon chains, while a peripheral stalk is formed by the delta and b chains.

It localises to the cell membrane. In terms of biological role, key component of the proton channel; it plays a direct role in the translocation of protons across the membrane. This is ATP synthase subunit a from Streptococcus gordonii (strain Challis / ATCC 35105 / BCRC 15272 / CH1 / DL1 / V288).